Reading from the N-terminus, the 807-residue chain is Glycerol-3-phosphate acyltransferase (807 aa).

The HXXXXD motif signature appears at C308–M313.

This sequence belongs to the GPAT/DAPAT family.

It is found in the cell inner membrane. The enzyme catalyses sn-glycerol 3-phosphate + an acyl-CoA = a 1-acyl-sn-glycero-3-phosphate + CoA. Its pathway is phospholipid metabolism; CDP-diacylglycerol biosynthesis; CDP-diacylglycerol from sn-glycerol 3-phosphate: step 1/3. The polypeptide is Glycerol-3-phosphate acyltransferase (Shewanella baltica (strain OS195)).